The chain runs to 339 residues: Heat-inducible transcription repressor HrcA (339 aa).

This sequence belongs to the HrcA family.

Functionally, negative regulator of class I heat shock genes (grpE-dnaK-dnaJ and groELS operons). Prevents heat-shock induction of these operons. The protein is Heat-inducible transcription repressor HrcA of Nitrosospira multiformis (strain ATCC 25196 / NCIMB 11849 / C 71).